A 287-amino-acid chain; its full sequence is Bifunctional protein FolD (287 aa).

NADP(+)-binding positions include 165-167, serine 190, and isoleucine 231; that span reads GRS.

This sequence belongs to the tetrahydrofolate dehydrogenase/cyclohydrolase family. Homodimer.

It catalyses the reaction (6R)-5,10-methylene-5,6,7,8-tetrahydrofolate + NADP(+) = (6R)-5,10-methenyltetrahydrofolate + NADPH. It carries out the reaction (6R)-5,10-methenyltetrahydrofolate + H2O = (6R)-10-formyltetrahydrofolate + H(+). The protein operates within one-carbon metabolism; tetrahydrofolate interconversion. Catalyzes the oxidation of 5,10-methylenetetrahydrofolate to 5,10-methenyltetrahydrofolate and then the hydrolysis of 5,10-methenyltetrahydrofolate to 10-formyltetrahydrofolate. This Trichodesmium erythraeum (strain IMS101) protein is Bifunctional protein FolD.